Here is a 783-residue protein sequence, read N- to C-terminus: ATP-dependent DNA helicase Hel308 (783 aa).

ATP is bound by residues glutamine 29 and 47 to 54 (VPTASGKT). A Helicase ATP-binding domain is found at 34 to 209 (ERGVTEGANL…WLDAELVDSD (176 aa)). Residues 154–157 (DEVH) carry the DEAH box motif. The 202-residue stretch at 242–443 (QTAAVVADTL…EPALRTHVLA (202 aa)) folds into the Helicase C-terminal domain. The segment at 744–783 (ETVGHPDPGMDGVAADTDAAPESGGEAGGDEGQASLGDFS) is disordered.

This sequence belongs to the helicase family. Hel308 subfamily. As to quaternary structure, monomer.

It carries out the reaction Couples ATP hydrolysis with the unwinding of duplex DNA by translocating in the 3'-5' direction.. It catalyses the reaction ATP + H2O = ADP + phosphate + H(+). Functionally, DNA-dependent ATPase and 3'-5' DNA helicase that may be involved in repair of stalled replication forks. The polypeptide is ATP-dependent DNA helicase Hel308 (Halobacterium salinarum (strain ATCC 700922 / JCM 11081 / NRC-1) (Halobacterium halobium)).